A 348-amino-acid chain; its full sequence is Putative 4-hydroxythreonine-4-phosphate dehydrogenase 2 (348 aa).

A divalent metal cation is bound by residues His180, His224, and His279.

The protein belongs to the PdxA family. Homodimer. The cofactor is Zn(2+). Mg(2+) is required as a cofactor. It depends on Co(2+) as a cofactor.

Its subcellular location is the cytoplasm. The enzyme catalyses 4-(phosphooxy)-L-threonine + NAD(+) = 3-amino-2-oxopropyl phosphate + CO2 + NADH. The protein operates within cofactor biosynthesis; pyridoxine 5'-phosphate biosynthesis; pyridoxine 5'-phosphate from D-erythrose 4-phosphate: step 4/5. Functionally, catalyzes the NAD(P)-dependent oxidation of 4-(phosphooxy)-L-threonine (HTP) into 2-amino-3-oxo-4-(phosphooxy)butyric acid which spontaneously decarboxylates to form 3-amino-2-oxopropyl phosphate (AHAP). The sequence is that of Putative 4-hydroxythreonine-4-phosphate dehydrogenase 2 from Rhizobium meliloti (strain 1021) (Ensifer meliloti).